We begin with the raw amino-acid sequence, 216 residues long: Regulator of G-protein signaling 19 (216 aa).

The span at 1–19 shows a compositional bias: basic and acidic residues; sequence MPTPHEAEKQHTGPEEADR. Positions 1-30 are disordered; the sequence is MPTPHEAEKQHTGPEEADRPPSMSSHDAAP. Phosphoserine is present on residues Ser24 and Ser97. One can recognise an RGS domain in the interval 90-206; that stretch reads SFDKLMHSPT…LTSPTYRSLL (117 aa). Phosphoserine; by MAPK1 and MAPK3 is present on Ser151. Positions 207 to 216 are interaction with GIPC; the sequence is LQGAPQSSEA.

In terms of assembly, interacts with GIPC PDZ domain. Interacts with GNAO1. Fatty acylated. Heavily palmitoylated in the cysteine string motif. Post-translationally, phosphorylated, mainly on serine residues.

The protein resides in the membrane. In terms of biological role, inhibits signal transduction by increasing the GTPase activity of G protein alpha subunits thereby driving them into their inactive GDP-bound form. Binds to G-alpha subfamily 1 members, with the order G(i)a3 &gt; G(i)a1 &gt; G(o)a &gt;&gt; G(z)a/G(i)a2. Activity on G(z)-alpha is inhibited by phosphorylation and palmitoylation of the G-protein. The polypeptide is Regulator of G-protein signaling 19 (Rgs19) (Mus musculus (Mouse)).